The following is a 231-amino-acid chain: NADH-ubiquinone oxidoreductase chain 4 (231 aa).

6 consecutive transmembrane segments (helical) span residues 1-21 (PIAG…YGII), 34-54 (MFLP…LTCL), 63-85 (IAYS…TPWG), 89-111 (GMTL…NTTY), 118-138 (ILIL…WWLL), and 156-176 (LLIM…LGLS).

The protein belongs to the complex I subunit 4 family.

The protein resides in the mitochondrion membrane. It carries out the reaction a ubiquinone + NADH + 5 H(+)(in) = a ubiquinol + NAD(+) + 4 H(+)(out). In terms of biological role, core subunit of the mitochondrial membrane respiratory chain NADH dehydrogenase (Complex I) that is believed to belong to the minimal assembly required for catalysis. Complex I functions in the transfer of electrons from NADH to the respiratory chain. The immediate electron acceptor for the enzyme is believed to be ubiquinone. This Calloselasma rhodostoma (Malayan pit viper) protein is NADH-ubiquinone oxidoreductase chain 4 (MT-ND4).